A 347-amino-acid polypeptide reads, in one-letter code: 3-isopropylmalate dehydrogenase (347 aa).

4 residues coordinate substrate: Arg-95, Arg-105, Arg-129, and Asp-220. Mg(2+) contacts are provided by Asp-220, Asp-244, and Asp-248. Residue 280 to 292 (GSAPDIAGQGKAD) coordinates NAD(+).

It belongs to the isocitrate and isopropylmalate dehydrogenases family. LeuB type 2 subfamily. Homodimer. The cofactor is Mg(2+). It depends on Mn(2+) as a cofactor.

The protein localises to the cytoplasm. It catalyses the reaction (2R,3S)-3-isopropylmalate + NAD(+) = 4-methyl-2-oxopentanoate + CO2 + NADH. It functions in the pathway amino-acid biosynthesis; L-leucine biosynthesis; L-leucine from 3-methyl-2-oxobutanoate: step 3/4. In terms of biological role, catalyzes the oxidation of 3-carboxy-2-hydroxy-4-methylpentanoate (3-isopropylmalate) to 3-carboxy-4-methyl-2-oxopentanoate. The product decarboxylates to 4-methyl-2 oxopentanoate. The protein is 3-isopropylmalate dehydrogenase of Beutenbergia cavernae (strain ATCC BAA-8 / DSM 12333 / CCUG 43141 / JCM 11478 / NBRC 16432 / NCIMB 13614 / HKI 0122).